Reading from the N-terminus, the 348-residue chain is D-erythrose-4-phosphate dehydrogenase (348 aa).

NAD(+)-binding positions include 12-13 (RI) and arginine 81. Substrate-binding positions include 154–156 (SCT), arginine 200, 213–214 (TK), and arginine 236. Cysteine 155 serves as the catalytic Nucleophile. An NAD(+)-binding site is contributed by asparagine 318.

This sequence belongs to the glyceraldehyde-3-phosphate dehydrogenase family. Epd subfamily. Homotetramer.

The protein localises to the cytoplasm. It carries out the reaction D-erythrose 4-phosphate + NAD(+) + H2O = 4-phospho-D-erythronate + NADH + 2 H(+). Its pathway is cofactor biosynthesis; pyridoxine 5'-phosphate biosynthesis; pyridoxine 5'-phosphate from D-erythrose 4-phosphate: step 1/5. In terms of biological role, catalyzes the NAD-dependent conversion of D-erythrose 4-phosphate to 4-phosphoerythronate. The chain is D-erythrose-4-phosphate dehydrogenase from Salmonella schwarzengrund (strain CVM19633).